Here is a 345-residue protein sequence, read N- to C-terminus: Phosphate acyltransferase (345 aa).

The protein belongs to the PlsX family. In terms of assembly, homodimer. Probably interacts with PlsY.

It is found in the cytoplasm. The catalysed reaction is a fatty acyl-[ACP] + phosphate = an acyl phosphate + holo-[ACP]. Its pathway is lipid metabolism; phospholipid metabolism. Its function is as follows. Catalyzes the reversible formation of acyl-phosphate (acyl-PO(4)) from acyl-[acyl-carrier-protein] (acyl-ACP). This enzyme utilizes acyl-ACP as fatty acyl donor, but not acyl-CoA. This is Phosphate acyltransferase from Chromobacterium violaceum (strain ATCC 12472 / DSM 30191 / JCM 1249 / CCUG 213 / NBRC 12614 / NCIMB 9131 / NCTC 9757 / MK).